A 282-amino-acid polypeptide reads, in one-letter code: D-alanine aminotransferase (282 aa).

Tyr-32 is a binding site for substrate. Arg-51 contributes to the pyridoxal 5'-phosphate binding site. Residues Arg-99 and His-101 each coordinate substrate. Lys-146 functions as the Proton acceptor in the catalytic mechanism. An N6-(pyridoxal phosphate)lysine modification is found at Lys-146. Pyridoxal 5'-phosphate is bound at residue Glu-178.

The protein belongs to the class-IV pyridoxal-phosphate-dependent aminotransferase family. As to quaternary structure, homodimer. Requires pyridoxal 5'-phosphate as cofactor.

It catalyses the reaction D-alanine + 2-oxoglutarate = D-glutamate + pyruvate. Acts on the D-isomers of alanine, leucine, aspartate, glutamate, aminobutyrate, norvaline and asparagine. The enzyme transfers an amino group from a substrate D-amino acid to the pyridoxal phosphate cofactor to form pyridoxamine and an alpha-keto acid in the first half-reaction. The second half-reaction is the reverse of the first, transferring the amino group from the pyridoxamine to a second alpha-keto acid to form the product D-amino acid via a ping-pong mechanism. This is an important process in the formation of D-alanine and D-glutamate, which are essential bacterial cell wall components. The chain is D-alanine aminotransferase (dat) from Staphylococcus haemolyticus.